An 889-amino-acid polypeptide reads, in one-letter code: Rho GTPase-activating protein 27 (889 aa).

Residues 6–69 (VGDVYVLVEH…PAQYVRELPA (64 aa)) enclose the SH3 domain. The interval 104-132 (AGPDGAPEESGGRASSLCGPAQRGAATQR) is disordered. Phosphoserine is present on residues S156, S216, and S249. 2 consecutive WW domains span residues 246 to 280 (PLPS…SPFE) and 299 to 333 (VSLE…DEAE). The segment covering 329–341 (EDEAENEPEEELE) has biased composition (acidic residues). The interval 329–397 (EDEAENEPEE…SPLTTPPGWS (69 aa)) is disordered. A Phosphoserine modification is found at S347. Positions 383–395 (EPGPTSPLTTPPG) are enriched in low complexity. The region spanning 411 to 444 (HFTQEQWVRLEDPHGKPYFYNPEDSSVRWELPQV) is the WW 3 domain. Residues 447–474 (PAPRSIHKSSQDGDTPAQASPPEEKVPA) form a disordered region. The residue at position 456 (S456) is a Phosphoserine. At T461 the chain carries Phosphothreonine. Residue S466 is modified to Phosphoserine. The PH domain maps to 496-612 (TLDKAGVLHR…WHKAIAQGIQ (117 aa)). Residues 617 to 655 (ELPPEESESSRVDFGSSERLGSWQEKEEDARPNAAAPAL) form a disordered region. The 190-residue stretch at 697–886 (CALAALCERE…LILQQCADIF (190 aa)) folds into the Rho-GAP domain.

As to quaternary structure, interacts with SH3KBP1/CIN85. In terms of tissue distribution, expressed in germinal center B-cell, spleen, chronic lymphocytic leukemia, pancreatic cancer and lung cancer.

The protein resides in the cytoplasm. It is found in the membrane. In terms of biological role, rho GTPase-activating protein which may be involved in clathrin-mediated endocytosis. GTPase activators for the Rho-type GTPases act by converting them to an inactive GDP-bound state. Has activity toward CDC42 and RAC1. The protein is Rho GTPase-activating protein 27 of Homo sapiens (Human).